The chain runs to 431 residues: MKFTESEKLHQEALEHIVGGVNSPSRSYKAVGGGSPVAMEKGEGAYFWDVDGNRYIDYLAAYGPIITGHAHPHITKAITKAAESGVLYGTPTKHEVTFAKMLKEAMPALDKVRFVNSGTEAVMTTIRVARAYTGRTKIIKFAGCYHGHSDLVLVAAGSGPSTLGTPDSAGVPKSIANEVITVPFNDIDSYKEALDRWGDEVAAVLVEPIVGNFGIVEPKDGFLQQVNDLTHEKGALVIYDEVITAFRFMYGGAQDLLQVKPDLTALGKIIGGGLPIGAYGGKKEIMEQVAPLGPAYQAGTMAGNPASILSGIACLEVLKQDGVYERLDQLGAMLEEGILAHAKKHQVDITVNRLKGALTVYFTKETIVNYEQAENTDGEMFARFFKLMLSQGINLAPSKYEAWFLTIAHTEKDISETLQAVDRAFEQLKQS.

An N6-(pyridoxal phosphate)lysine modification is found at K268.

This sequence belongs to the class-III pyridoxal-phosphate-dependent aminotransferase family. HemL subfamily. In terms of assembly, homodimer. It depends on pyridoxal 5'-phosphate as a cofactor.

The protein localises to the cytoplasm. The catalysed reaction is (S)-4-amino-5-oxopentanoate = 5-aminolevulinate. The protein operates within porphyrin-containing compound metabolism; protoporphyrin-IX biosynthesis; 5-aminolevulinate from L-glutamyl-tRNA(Glu): step 2/2. The polypeptide is Glutamate-1-semialdehyde 2,1-aminomutase 1 (Bacillus pumilus (strain SAFR-032)).